Here is a 251-residue protein sequence, read N- to C-terminus: Ubiquinone/menaquinone biosynthesis C-methyltransferase UbiE (251 aa).

S-adenosyl-L-methionine is bound by residues T74, D95, and 123 to 124 (NA).

Belongs to the class I-like SAM-binding methyltransferase superfamily. MenG/UbiE family.

It catalyses the reaction a 2-demethylmenaquinol + S-adenosyl-L-methionine = a menaquinol + S-adenosyl-L-homocysteine + H(+). The catalysed reaction is a 2-methoxy-6-(all-trans-polyprenyl)benzene-1,4-diol + S-adenosyl-L-methionine = a 5-methoxy-2-methyl-3-(all-trans-polyprenyl)benzene-1,4-diol + S-adenosyl-L-homocysteine + H(+). The protein operates within quinol/quinone metabolism; menaquinone biosynthesis; menaquinol from 1,4-dihydroxy-2-naphthoate: step 2/2. It functions in the pathway cofactor biosynthesis; ubiquinone biosynthesis. Methyltransferase required for the conversion of demethylmenaquinol (DMKH2) to menaquinol (MKH2) and the conversion of 2-polyprenyl-6-methoxy-1,4-benzoquinol (DDMQH2) to 2-polyprenyl-3-methyl-6-methoxy-1,4-benzoquinol (DMQH2). This chain is Ubiquinone/menaquinone biosynthesis C-methyltransferase UbiE, found in Shewanella sediminis (strain HAW-EB3).